Consider the following 65-residue polypeptide: Large ribosomal subunit protein bL35 (65 aa).

The interval 1-30 is disordered; it reads MPKMKTVSGAAKRFKKTGSGRFKSKQSHLR. Residues 12–30 show a composition bias toward basic residues; that stretch reads KRFKKTGSGRFKSKQSHLR.

It belongs to the bacterial ribosomal protein bL35 family.

This is Large ribosomal subunit protein bL35 from Alteromonas mediterranea (strain DSM 17117 / CIP 110805 / LMG 28347 / Deep ecotype).